Here is a 601-residue protein sequence, read N- to C-terminus: Glutathione-regulated potassium-efflux system protein KefB (601 aa).

Transmembrane regions (helical) follow at residues 4–24 (SDFL…VPLA), 29–49 (IGAV…GLGF), 55–75 (EILH…GLEL), 87–107 (IFGV…GLLM), 115–135 (AAVV…LQLM), 152–172 (VLLF…LLAG), 177–197 (HFDW…LIGG), 207–227 (FIAA…LVLG), 230–250 (LFMD…GVLL), 268–288 (GLLL…GVLY), 291–311 (LLWV…VLYL), 324–344 (MQFA…FSTA), and 356–376 (ALLL…MKLV). Residues 400-519 (KPQVIVVGFG…AGVTQFSRET (120 aa)) form the RCK N-terminal domain.

This sequence belongs to the monovalent cation:proton antiporter 2 (CPA2) transporter (TC 2.A.37) family. KefB subfamily. Interacts with the regulatory subunit KefG.

It is found in the cell inner membrane. Its function is as follows. Pore-forming subunit of a potassium efflux system that confers protection against electrophiles. Catalyzes K(+)/H(+) antiport. The polypeptide is Glutathione-regulated potassium-efflux system protein KefB (Escherichia coli O81 (strain ED1a)).